The following is a 374-amino-acid chain: 4-galactosyl-N-acetylglucosaminide 3-alpha-L-fucosyltransferase FUT5 (374 aa).

Residues 1–15 are Cytoplasmic-facing; the sequence is MDPLGPAKPQWLWRR. Residues 16–34 traverse the membrane as a helical; Signal-anchor for type II membrane protein segment; that stretch reads CLAGLLFQLLVAVCFFSYL. At 35–374 the chain is on the lumenal side; sequence RVSQDHATGS…TVRSIAAWFT (340 aa). Asn-60, Asn-105, Asn-167, and Asn-198 each carry an N-linked (GlcNAc...) asparagine glycan.

This sequence belongs to the glycosyltransferase 10 family.

Its subcellular location is the golgi apparatus. The protein localises to the golgi stack membrane. It carries out the reaction a beta-D-galactosyl-(1-&gt;3)-N-acetyl-beta-D-glucosaminyl derivative + GDP-beta-L-fucose = a beta-D-galactosyl-(1-&gt;3)-[alpha-L-fucosyl-(1-&gt;4)]-N-acetyl-beta-D-glucosaminyl derivative + GDP + H(+). The enzyme catalyses an N-acetyl-alpha-neuraminyl-(2-&gt;3)-beta-D-galactosyl-(1-&gt;4)-N-acetyl-beta-D-glucosaminyl derivative + GDP-beta-L-fucose = an alpha-Neu5Ac-(2-&gt;3)-beta-D-Gal-(1-&gt;4)-[alpha-L-Fuc-(1-&gt;3)]-beta-D-GlcNAc derivative + GDP + H(+). The catalysed reaction is an alpha-Neu5Ac-(2-&gt;3)-beta-D-Gal-(1-&gt;4)-beta-D-GlcNAc-(1-&gt;3)-beta-D-Gal-(1-&gt;4)-[alpha-L-Fuc-(1-&gt;3)]-beta-D-GlcNAc derivative + GDP-beta-L-fucose = an alpha-Neu5Ac-(2-&gt;3)-beta-D-Gal-(1-&gt;4)-[alpha-L-Fuc-(1-&gt;3)]-beta-D-GlcNAc-(1-&gt;3)-beta-D-Gal-(1-&gt;4)-[alpha-L-Fuc-(1-&gt;3)]-beta-D-GlcNAc derivative + GDP + H(+). It catalyses the reaction a beta-D-galactosyl-(1-&gt;4)-N-acetyl-beta-D-glucosaminyl derivative + GDP-beta-L-fucose = a beta-D-galactosyl-(1-&gt;4)-[alpha-L-fucosyl-(1-&gt;3)]-N-acetyl-beta-D-glucosaminyl derivative + GDP + H(+). It carries out the reaction a neolactoside nLc4Cer + GDP-beta-L-fucose = a neolactoside III(3)-alpha-Fuc-nLc4Cer + GDP + H(+). The enzyme catalyses a neolactoside nLc6Cer + GDP-beta-L-fucose = beta-D-galactosyl-(1-&gt;4)-N-acetyl-beta-D-glucosaminyl-(1-&gt;3)-beta-D-galactosyl-(1-&gt;4)-[alpha-L-fucosyl-(1-&gt;3)]-N-acetyl-beta-D-glucosaminyl-(1-&gt;3)-beta-D-galactosyl-(1-&gt;4)-beta-D-glucosyl-(1&lt;-&gt;1')-ceramide + GDP + H(+). The catalysed reaction is a neolactoside nLc6Cer(d18:1(4E)) + GDP-beta-L-fucose = a neolactoside III(3)-alpha-Fuc-nLc6Cer(d18:1(4E)) + GDP + H(+). It catalyses the reaction a neolactoside nLc4Cer(d18:1(4E)) + GDP-beta-L-fucose = a neolactoside III(3)-alpha-Fuc-nLc4Cer(d18:1(4E)) + GDP + H(+). It carries out the reaction a neolactoside VI(3)-alpha-NeuNAc-nLc6Cer + GDP-beta-L-fucose = a neolactoside VI(3)-alpha-NeuAc,III(3)-alphaFuc-nLc6Cer + GDP + H(+). The enzyme catalyses beta-D-galactosyl-(1-&gt;4)-N-acetyl-D-glucosamine + GDP-beta-L-fucose = beta-D-galactosyl-(1-&gt;4)-[alpha-L-fucosyl-(1-&gt;3)]-N-acetyl-D-glucosamine + GDP + H(+). The catalysed reaction is N-acetyl-alpha-neuraminosyl-(2-&gt;3)-beta-D-galactosyl-(1-&gt;4)-N-acetyl-beta-D-glucosamine + GDP-beta-L-fucose = N-acetyl-alpha-neuraminosyl-(2-&gt;3)-beta-D-galactosyl-(1-&gt;4)-[alpha-L-fucosyl-(1-&gt;3)]-N-acetyl-beta-D-glucosamine + GDP + H(+). It catalyses the reaction alpha-L-Fuc-(1-&gt;2)-beta-D-Gal-(1-&gt;4)-D-GlcNAc + GDP-beta-L-fucose = alpha-L-Fuc-(1-&gt;2)-beta-D-Gal-(1-&gt;4)-[alpha-L-Fuc-(1-&gt;3)]-D-GlcNAc + GDP + H(+). It carries out the reaction an alpha-Neu5Ac-(2-&gt;3)-beta-D-Gal-(1-&gt;3)-D-GlcNAc derivative + GDP-beta-L-fucose = an alpha-Neu5Ac-(2-&gt;3)-beta-D-Gal-(1-&gt;3)-[alpha-L-Fuc-(1-&gt;4)]-beta-D-GlcNAc derivative + GDP + H(+). It functions in the pathway protein modification; protein glycosylation. Functionally, catalyzes preferentially the transfer of L-fucose, from a guanosine diphosphate-beta-L-fucose, to the N-acetyl-beta-D-glucosamine (GlcNAc) of an N-acetyllactosamine unit (type 2 chain) of an oligosaccharide, or a glycoprotein- and a glycolipid-linked N-acetyllactosamine unit via an alpha (1,3) linkage and participates in the surface expression of VIM-2, Lewis X/SSEA-1 and sialyl Lewis X antigens. Preferentially transfers fucose to the GlcNAc of an internal N-acetyllactosamine unit of a poly-N-acetyllactosamine chain acceptor substrate. Also catalyzes to a lesser extend the transfer of L-fucose to the GlcNAc of a type 1 (beta-D-galactosyl-(1-&gt;3)-N-acetyl-beta-D-glucosaminyl) or H-type 1 (alpha-L-Fuc-(1-&gt;2)-beta-D-Gal-(1-&gt;3)-D-GlcNAc) chain oligosaccharide via an alpha (1,4) linkage. Preferentially catalyzes sialylated type 2 oligosaccharide acceptors over neutral type 2 or H type 2 (alpha-L-Fuc-(1-&gt;2)-beta-D-Gal-(1-&gt;4)-D-GlcNAc) oligosaccharide acceptors. Lactose-based structures are also acceptor substrates. This is 4-galactosyl-N-acetylglucosaminide 3-alpha-L-fucosyltransferase FUT5 from Gorilla gorilla gorilla (Western lowland gorilla).